Reading from the N-terminus, the 273-residue chain is Transcriptional regulator ICP22 homolog (273 aa).

2 disordered regions span residues 1 to 57 and 160 to 273; these read GSCR…YGLP and YEQR…SARR. Residues 11 to 33 show a composition bias toward low complexity; the sequence is PSTSPIIPSLSPSSGGNPSPRSS. Acidic residues-rich tracts occupy residues 178–194 and 204–224; these read EECE…EEEA and SPEE…EDDS. A compositionally biased stretch (low complexity) spans 261-273; sequence VPKGGRPAKSARR.

It belongs to the herpesviridae ICP22 family.

This is Transcriptional regulator ICP22 homolog from Equus caballus (Horse).